The following is a 553-amino-acid chain: CTP synthase (553 aa).

Residues 1–270 are amidoligase domain; that stretch reads MTKYVFVTGG…DRLICEELRL (270 aa). S13 provides a ligand contact to CTP. Position 13 (S13) interacts with UTP. ATP-binding positions include 14–19 and D71; that span reads SLGKGI. Mg(2+) contacts are provided by D71 and E144. Residues 151–153, 191–196, and K227 each bind CTP; these read DIE and KTKPTQ. UTP-binding positions include 191–196 and K227; that span reads KTKPTQ. Residues 295-547 form the Glutamine amidotransferase type-1 domain; the sequence is TIGMVGKYVD…VQAALACQQT (253 aa). Position 356 (G356) interacts with L-glutamine. C383 serves as the catalytic Nucleophile; for glutamine hydrolysis. Residues 384–387, E407, and R473 each bind L-glutamine; that span reads LGMQ. Residues H520 and E522 contribute to the active site.

This sequence belongs to the CTP synthase family. In terms of assembly, homotetramer.

It carries out the reaction UTP + L-glutamine + ATP + H2O = CTP + L-glutamate + ADP + phosphate + 2 H(+). It catalyses the reaction L-glutamine + H2O = L-glutamate + NH4(+). The catalysed reaction is UTP + NH4(+) + ATP = CTP + ADP + phosphate + 2 H(+). It participates in pyrimidine metabolism; CTP biosynthesis via de novo pathway; CTP from UDP: step 2/2. Its activity is regulated as follows. Allosterically activated by GTP, when glutamine is the substrate; GTP has no effect on the reaction when ammonia is the substrate. The allosteric effector GTP functions by stabilizing the protein conformation that binds the tetrahedral intermediate(s) formed during glutamine hydrolysis. Inhibited by the product CTP, via allosteric rather than competitive inhibition. In terms of biological role, catalyzes the ATP-dependent amination of UTP to CTP with either L-glutamine or ammonia as the source of nitrogen. Regulates intracellular CTP levels through interactions with the four ribonucleotide triphosphates. This chain is CTP synthase, found in Burkholderia mallei (strain NCTC 10247).